The following is a 53-amino-acid chain: 20 kDa chaperonin (53 aa).

Cpn-10 domain stretches follow at residues 1–10 (YTSIKPLGDR) and 11–53 (VAEA…KITP).

It belongs to the GroES chaperonin family. Forms stable complexes with cpn60 in the presence of ATP. Homotetramer.

It localises to the plastid. It is found in the chloroplast. Its function is as follows. Seems to function only as a co-chaperone, along with cpn60, and in certain cases is essential for the discharge of biologically active proteins from cpn60. This is 20 kDa chaperonin from Populus euphratica (Euphrates poplar).